A 390-amino-acid polypeptide reads, in one-letter code: 8-amino-7-oxononanoate synthase (390 aa).

Arg-22 serves as a coordination point for substrate. Gly-109–Tyr-110 is a pyridoxal 5'-phosphate binding site. His-134 provides a ligand contact to substrate. Residues Ser-180, His-208, and Thr-236 each coordinate pyridoxal 5'-phosphate. Lys-239 bears the N6-(pyridoxal phosphate)lysine mark. Thr-353 is a binding site for substrate.

Belongs to the class-II pyridoxal-phosphate-dependent aminotransferase family. BioF subfamily. Homodimer. Pyridoxal 5'-phosphate serves as cofactor.

It catalyses the reaction 6-carboxyhexanoyl-[ACP] + L-alanine + H(+) = (8S)-8-amino-7-oxononanoate + holo-[ACP] + CO2. Its pathway is cofactor biosynthesis; biotin biosynthesis. Functionally, catalyzes the decarboxylative condensation of pimeloyl-[acyl-carrier protein] and L-alanine to produce 8-amino-7-oxononanoate (AON), [acyl-carrier protein], and carbon dioxide. The chain is 8-amino-7-oxononanoate synthase from Azoarcus sp. (strain BH72).